Reading from the N-terminus, the 169-residue chain is Ureidoglycolate lyase (169 aa).

This sequence belongs to the ureidoglycolate lyase family. Homodimer. Ni(2+) is required as a cofactor.

The catalysed reaction is (S)-ureidoglycolate = urea + glyoxylate. It participates in nitrogen metabolism; (S)-allantoin degradation. Catalyzes the catabolism of the allantoin degradation intermediate (S)-ureidoglycolate, generating urea and glyoxylate. Involved in the utilization of allantoin as nitrogen source. The protein is Ureidoglycolate lyase of Brucella melitensis biotype 2 (strain ATCC 23457).